A 123-amino-acid chain; its full sequence is Large ribosomal subunit protein uL22c (123 aa).

It belongs to the universal ribosomal protein uL22 family. In terms of assembly, part of the 50S ribosomal subunit.

The protein localises to the plastid. It localises to the chloroplast. Its function is as follows. This protein binds specifically to 23S rRNA. The globular domain of the protein is located near the polypeptide exit tunnel on the outside of the subunit, while an extended beta-hairpin is found that lines the wall of the exit tunnel in the center of the 70S ribosome. The protein is Large ribosomal subunit protein uL22c (rpl22) of Illicium oligandrum (Star anise).